A 119-amino-acid polypeptide reads, in one-letter code: Virulence protein VsdF (119 aa).

Functionally, expressed but non-essential protein, involved in the virulence of Salmonellas. The protein is Virulence protein VsdF (vsdF) of Salmonella dublin.